A 45-amino-acid chain; its full sequence is Large ribosomal subunit protein bL34 (45 aa).

It belongs to the bacterial ribosomal protein bL34 family.

The polypeptide is Large ribosomal subunit protein bL34 (Acidothermus cellulolyticus (strain ATCC 43068 / DSM 8971 / 11B)).